The following is a 101-amino-acid chain: Thylakoid-associated protein slr0729 (101 aa).

Its subcellular location is the cellular thylakoid membrane. In Synechocystis sp. (strain ATCC 27184 / PCC 6803 / Kazusa), this protein is Thylakoid-associated protein slr0729.